The chain runs to 488 residues: Inosine-5'-monophosphate dehydrogenase (488 aa).

CBS domains follow at residues 94–150 (IVSE…SKTV) and 154–215 (MTKK…CKDE). Residues aspartate 249, 249–251 (DSS), and 299–301 (GIG) each bind NAD(+). 2 residues coordinate K(+): glycine 301 and glycine 303. Position 304 (serine 304) interacts with IMP. Residue cysteine 306 participates in K(+) binding. Residue cysteine 306 is the Thioimidate intermediate of the active site. IMP-binding positions include 339–341 (DGG), 362–363 (GS), and 386–390 (YRGMG). The active-site Proton acceptor is arginine 402. Glutamate 416 provides a ligand contact to IMP. K(+) contacts are provided by glutamate 470, serine 471, and histidine 472.

The protein belongs to the IMPDH/GMPR family. Homotetramer. K(+) is required as a cofactor.

It catalyses the reaction IMP + NAD(+) + H2O = XMP + NADH + H(+). It participates in purine metabolism; XMP biosynthesis via de novo pathway; XMP from IMP: step 1/1. With respect to regulation, mycophenolic acid (MPA) is a non-competitive inhibitor that prevents formation of the closed enzyme conformation by binding to the same site as the amobile flap. In contrast, mizoribine monophosphate (MZP) is a competitive inhibitor that induces the closed conformation. MPA is a potent inhibitor of mammalian IMPDHs but a poor inhibitor of the bacterial enzymes. MZP is a more potent inhibitor of bacterial IMPDH. Functionally, catalyzes the conversion of inosine 5'-phosphate (IMP) to xanthosine 5'-phosphate (XMP), the first committed and rate-limiting step in the de novo synthesis of guanine nucleotides, and therefore plays an important role in the regulation of cell growth. In Haemophilus influenzae (strain ATCC 51907 / DSM 11121 / KW20 / Rd), this protein is Inosine-5'-monophosphate dehydrogenase.